Here is a 434-residue protein sequence, read N- to C-terminus: Phosphomethylpyrimidine synthase (434 aa).

Substrate-binding positions include Asn-74, Met-103, Tyr-132, His-171, 193-195, 234-237, and Glu-273; these read SRG and DGIR. His-277 lines the Zn(2+) pocket. Substrate is bound at residue Tyr-300. Position 341 (His-341) interacts with Zn(2+). 3 residues coordinate [4Fe-4S] cluster: Cys-417, Cys-420, and Cys-424.

The protein belongs to the ThiC family. Homodimer. [4Fe-4S] cluster is required as a cofactor.

The enzyme catalyses 5-amino-1-(5-phospho-beta-D-ribosyl)imidazole + S-adenosyl-L-methionine = 4-amino-2-methyl-5-(phosphooxymethyl)pyrimidine + CO + 5'-deoxyadenosine + formate + L-methionine + 3 H(+). Its pathway is cofactor biosynthesis; thiamine diphosphate biosynthesis. Its function is as follows. Catalyzes the synthesis of the hydroxymethylpyrimidine phosphate (HMP-P) moiety of thiamine from aminoimidazole ribotide (AIR) in a radical S-adenosyl-L-methionine (SAM)-dependent reaction. The sequence is that of Phosphomethylpyrimidine synthase from Desulfotalea psychrophila (strain LSv54 / DSM 12343).